The primary structure comprises 272 residues: Putative phosphoenolpyruvate synthase regulatory protein (272 aa).

ADP is bound at residue 152–159 (GVSRCGKT).

It belongs to the pyruvate, phosphate/water dikinase regulatory protein family. PSRP subfamily.

The catalysed reaction is [pyruvate, water dikinase] + ADP = [pyruvate, water dikinase]-phosphate + AMP + H(+). It catalyses the reaction [pyruvate, water dikinase]-phosphate + phosphate + H(+) = [pyruvate, water dikinase] + diphosphate. Bifunctional serine/threonine kinase and phosphorylase involved in the regulation of the phosphoenolpyruvate synthase (PEPS) by catalyzing its phosphorylation/dephosphorylation. This is Putative phosphoenolpyruvate synthase regulatory protein from Pseudomonas putida (strain GB-1).